Here is a 118-residue protein sequence, read N- to C-terminus: Small ribosomal subunit protein uS13 (118 aa).

Residues 94–118 are disordered; that stretch reads GLPLRGQRTKTNARTRKGPRKPIRK.

It belongs to the universal ribosomal protein uS13 family. As to quaternary structure, part of the 30S ribosomal subunit. Forms a loose heterodimer with protein S19. Forms two bridges to the 50S subunit in the 70S ribosome.

Functionally, located at the top of the head of the 30S subunit, it contacts several helices of the 16S rRNA. In the 70S ribosome it contacts the 23S rRNA (bridge B1a) and protein L5 of the 50S subunit (bridge B1b), connecting the 2 subunits; these bridges are implicated in subunit movement. Contacts the tRNAs in the A and P-sites. This Chromohalobacter salexigens (strain ATCC BAA-138 / DSM 3043 / CIP 106854 / NCIMB 13768 / 1H11) protein is Small ribosomal subunit protein uS13.